Here is a 418-residue protein sequence, read N- to C-terminus: Caveolae-associated protein 2 (418 aa).

Positions 1–42 are disordered; the sequence is MGEDAAQAEKFQHPNTDMLQEKPSSPSPMPSSTPSPSLNLGS. An N-acetylglycine modification is found at Gly-2. Residues 2–168 are interaction with CAVIN1; that stretch reads GEDAAQAEKF…IFQEESEIPA (167 aa). Phosphoserine occurs at positions 27, 35, 37, and 51. Coiled-coil stretches lie at residues 61–87 and 126–268; these read LLDK…INLE and RAVR…VERR. Positions 62-100 are leucine-zipper; the sequence is LDKLVNMLDAVRENQHNMEQRQINLEGSVKGIQNDLTKL. Thr-196 carries the post-translational modification Phosphothreonine. Disordered regions lie at residues 200-238 and 262-382; these read VDLS…SLKK and IVSV…ALQQ. Phosphoserine is present on residues Ser-203, Ser-204, and Ser-218. Over residues 203–219 the composition is skewed to acidic residues; it reads SSDDELPRDEEALEDSA. A compositionally biased stretch (basic and acidic residues) spans 220–238; the sequence is EEKMEESRAEKIKRSSLKK. Residues 275–287 are compositionally biased toward polar residues; it reads LTPNHQKASSGKS. Phosphoserine occurs at positions 283, 284, 287, 288, 293, and 296. The segment covering 303-321 has biased composition (basic and acidic residues); that stretch reads REGESSVENETKLEDQMQE. Phosphoserine is present on residues Ser-327, Ser-336, Ser-359, and Ser-363. A compositionally biased stretch (polar residues) spans 355 to 366; the sequence is RGNNSAVGSNAD. Thr-368 is modified (phosphothreonine). Over residues 368 to 377 the composition is skewed to acidic residues; that stretch reads TIEEDEEEEP. Tyr-388 carries the phosphotyrosine modification. Phosphoserine occurs at positions 390 and 396. The segment at 396–418 is disordered; that stretch reads SEEMEEPSEKQVQPAVLHVDQTA.

Belongs to the CAVIN family. Component of the CAVIN complex composed of CAVIN1, CAVIN2, CAVIN3 and CAVIN4. Binds to PRKCA in the presence of phosphatidylserine. Interacts with CAVIN4; this augments the transactivation of NPPA by CAVIN4. Interacts with CAVIN1. Interacts with CAV3. In terms of processing, the N-terminus is blocked. As to expression, heart, adipose tissue, lung and endothelial cells (at protein level). Highly expressed in kidney and expressed at lower levels in liver, spleen, thymus, stomach, intestine and uterus.

Its subcellular location is the cytoplasm. It localises to the cytosol. The protein localises to the membrane. It is found in the caveola. Functionally, plays an important role in caveolar biogenesis and morphology. Regulates caveolae morphology by inducing membrane curvature within caveolae. Plays a role in caveola formation in a tissue-specific manner. Required for the formation of caveolae in the lung and fat endothelia but not in the heart endothelia. Negatively regulates the size or stability of CAVIN complexes in the lung endothelial cells. May play a role in targeting PRKCA to caveolae. In Mus musculus (Mouse), this protein is Caveolae-associated protein 2 (Cavin2).